The sequence spans 377 residues: Ipis-1 (377 aa).

N-linked (GlcNAc...) asparagine glycans are attached at residues Asn-11 and Asn-226.

Belongs to the serpin family. In terms of tissue distribution, female salivary gland. Not detected in midgut and other tissues.

The protein resides in the secreted. Salivary protein with immunosuppressive properties that can modulate blood feeding of ticks on vertebrate species. Inhibits proliferation of bovine peripheral blood mononuclear cells (PBMCs). Inhibits IFN-gamma (IFNG) production by bovine PBMCs. This chain is Ipis-1, found in Ixodes persulcatus (Taiga tick).